A 252-amino-acid polypeptide reads, in one-letter code: MAGIDLNADLGEGFGVWRLGDDDAMLGIVSSANVACGFHAGDPAGLLRVCRSAAERGVRVGAQVSYRDLAGFGRRFIDVAADELLADVVYQIGALQAIAHAAGSSVCYVKPHGALYNTIVTHPAQAAAVAEAVRLVDPGLPVLGMAGSVFFDEAARRGLRVVAEAFADRAYRPDGRLVSRREPGAVLADPAAIAERVLAMVETGAVTAVDGTRLALSVESVCVHGDSPGAVQIATAVRDRLRAAGVEIRAFC.

Belongs to the LamB/PxpA family. In terms of assembly, forms a complex composed of PxpA, PxpB and PxpC.

It carries out the reaction 5-oxo-L-proline + ATP + 2 H2O = L-glutamate + ADP + phosphate + H(+). Catalyzes the cleavage of 5-oxoproline to form L-glutamate coupled to the hydrolysis of ATP to ADP and inorganic phosphate. This chain is 5-oxoprolinase subunit A, found in Mycobacterium avium (strain 104).